The following is a 499-amino-acid chain: Bifunctional purine biosynthesis protein PurH (499 aa).

Residues 1–144 (MIKRALISVF…KNFQDVVVLT (144 aa)) form the MGS-like domain.

It belongs to the PurH family.

It catalyses the reaction (6R)-10-formyltetrahydrofolate + 5-amino-1-(5-phospho-beta-D-ribosyl)imidazole-4-carboxamide = 5-formamido-1-(5-phospho-D-ribosyl)imidazole-4-carboxamide + (6S)-5,6,7,8-tetrahydrofolate. It carries out the reaction IMP + H2O = 5-formamido-1-(5-phospho-D-ribosyl)imidazole-4-carboxamide. The protein operates within purine metabolism; IMP biosynthesis via de novo pathway; 5-formamido-1-(5-phospho-D-ribosyl)imidazole-4-carboxamide from 5-amino-1-(5-phospho-D-ribosyl)imidazole-4-carboxamide (10-formyl THF route): step 1/1. Its pathway is purine metabolism; IMP biosynthesis via de novo pathway; IMP from 5-formamido-1-(5-phospho-D-ribosyl)imidazole-4-carboxamide: step 1/1. This Clostridium acetobutylicum (strain ATCC 824 / DSM 792 / JCM 1419 / IAM 19013 / LMG 5710 / NBRC 13948 / NRRL B-527 / VKM B-1787 / 2291 / W) protein is Bifunctional purine biosynthesis protein PurH.